A 435-amino-acid polypeptide reads, in one-letter code: Serine--tRNA ligase (435 aa).

237–239 lines the L-serine pocket; sequence TAE. Residue 268-270 coordinates ATP; the sequence is RSE. An L-serine-binding site is contributed by E291. 355–358 contacts ATP; it reads EISS. Residue S390 coordinates L-serine.

Belongs to the class-II aminoacyl-tRNA synthetase family. Type-1 seryl-tRNA synthetase subfamily. Homodimer. The tRNA molecule binds across the dimer.

It localises to the cytoplasm. It carries out the reaction tRNA(Ser) + L-serine + ATP = L-seryl-tRNA(Ser) + AMP + diphosphate + H(+). It catalyses the reaction tRNA(Sec) + L-serine + ATP = L-seryl-tRNA(Sec) + AMP + diphosphate + H(+). It participates in aminoacyl-tRNA biosynthesis; selenocysteinyl-tRNA(Sec) biosynthesis; L-seryl-tRNA(Sec) from L-serine and tRNA(Sec): step 1/1. Functionally, catalyzes the attachment of serine to tRNA(Ser). Is also able to aminoacylate tRNA(Sec) with serine, to form the misacylated tRNA L-seryl-tRNA(Sec), which will be further converted into selenocysteinyl-tRNA(Sec). This is Serine--tRNA ligase from Lactobacillus delbrueckii subsp. bulgaricus (strain ATCC BAA-365 / Lb-18).